A 360-amino-acid polypeptide reads, in one-letter code: Vignain (360 aa).

An N-terminal signal peptide occupies residues M1–S20. A propeptide spans F21 to D124 (activation peptide). The N-linked (GlcNAc...) asparagine glycan is linked to N115. Intrachain disulfides connect C147/C189, C181/C222, and C280/C332. C150 is an active-site residue. Catalysis depends on residues H286 and N307. Positions P341 to L360 are disordered. A compositionally biased stretch (polar residues) spans K344–K353. Residues S354–L360 constitute a propeptide, removed in mature form. The prevents secretion from ER stretch occupies residues K357 to L360.

Belongs to the peptidase C1 family. Post-translationally, the potential N-glycosylation site at Asn-115 is not glycosylated.

The protein resides in the cytoplasmic vesicle. With respect to regulation, low pH triggers activation of the protease and removal of the propeptide and the KDEL motif. Involved in programmed cell death. Shows a pronounced preference for hydrophobic residues in the P2 position and no obvious preference in the P1 position of the cleavage site. Accepts proline at the P1 and P1' positions. This is Vignain (CYSEP) from Ricinus communis (Castor bean).